The chain runs to 217 residues: Large ribosomal subunit protein uL3 (217 aa).

It belongs to the universal ribosomal protein uL3 family. As to quaternary structure, part of the 50S ribosomal subunit. Forms a cluster with proteins L14 and L19.

Its function is as follows. One of the primary rRNA binding proteins, it binds directly near the 3'-end of the 23S rRNA, where it nucleates assembly of the 50S subunit. This is Large ribosomal subunit protein uL3 from Mycobacterium leprae (strain TN).